An 868-amino-acid polypeptide reads, in one-letter code: Monofunctional pimaradiene synthase (868 aa).

Positions 620, 624, 764, 768, and 772 each coordinate Mg(2+).

This sequence belongs to the terpene synthase family. Tpsd subfamily. It depends on Mg(2+) as a cofactor.

It carries out the reaction (+)-copalyl diphosphate = (-)-pimara-8(14),15-diene + diphosphate. Its pathway is terpene metabolism; oleoresin biosynthesis. Its function is as follows. Involved in defensive oleoresin formation in conifers in response to insect attack or other injury. Involved in diterpene (C20) olefins biosynthesis. Monofunctional enzyme lacking the DXDD motif in the class II active site relevant for the cyclization of geranylgeranyl diphosphate (GGPP). Requires (+)-copalyl diphosphate ((+)-CPP) as substrate, but no activity with GGPP or ent-CPP. Pimaradiene is the major products of the enzyme. The chain is Monofunctional pimaradiene synthase from Pinus banksiana (Jack pine).